Reading from the N-terminus, the 1207-residue chain is Disease resistance protein RPP2B (1207 aa).

The 166-residue stretch at 15–180 (CEFDVFVSFR…EIVKNTFRML (166 aa)) folds into the TIR domain. E89 is a catalytic residue. The region spanning 201 to 445 (ELEKLLMFDN…FLDIACFFRS (245 aa)) is the NB-ARC domain. LRR repeat units follow at residues 607 to 630 (PKEL…EKNT), 653 to 676 (AKNL…VKQM), 677 to 699 (NELI…GFKI), 720 to 743 (SESI…IESL), 744 to 767 (HSLI…LYKL), 769 to 791 (SLQE…KEKM), 792 to 815 (ECLE…CLSN), 840 to 862 (NSFL…KFSS), and 863 to 886 (LRSL…IEKL).

Belongs to the disease resistance TIR-NB-LRR family.

It catalyses the reaction NAD(+) + H2O = ADP-D-ribose + nicotinamide + H(+). Disease resistance protein that cooperates with RPP2A to confer resistance to Hyaloperonospora parasitica isolate Cala2. The sequence is that of Disease resistance protein RPP2B from Arabidopsis thaliana (Mouse-ear cress).